A 497-amino-acid chain; its full sequence is Kynureninase (497 aa).

The disordered stretch occupies residues 59-86; it reads GRLPAYPPNHAKPGETATAQNGTSNTND. Residues 75–86 show a composition bias toward polar residues; that stretch reads ATAQNGTSNTND. Pyridoxal 5'-phosphate is bound by residues Leu-166, Thr-167, 194–197, Asp-278, His-281, and Tyr-303; that span reads FPSD. Lys-304 is modified (N6-(pyridoxal phosphate)lysine). Pyridoxal 5'-phosphate contacts are provided by Trp-337 and Asn-365.

It belongs to the kynureninase family. Homodimer. Pyridoxal 5'-phosphate is required as a cofactor.

The protein resides in the cytoplasm. The catalysed reaction is L-kynurenine + H2O = anthranilate + L-alanine + H(+). It catalyses the reaction 3-hydroxy-L-kynurenine + H2O = 3-hydroxyanthranilate + L-alanine + H(+). The protein operates within amino-acid degradation; L-kynurenine degradation; L-alanine and anthranilate from L-kynurenine: step 1/1. It participates in cofactor biosynthesis; NAD(+) biosynthesis; quinolinate from L-kynurenine: step 2/3. In terms of biological role, catalyzes the cleavage of L-kynurenine (L-Kyn) and L-3-hydroxykynurenine (L-3OHKyn) into anthranilic acid (AA) and 3-hydroxyanthranilic acid (3-OHAA), respectively. This is Kynureninase from Pyricularia oryzae (strain 70-15 / ATCC MYA-4617 / FGSC 8958) (Rice blast fungus).